Reading from the N-terminus, the 144-residue chain is Aspartate carbamoyltransferase regulatory chain (144 aa).

The Zn(2+) site is built by Cys103, Cys108, Cys132, and Cys135.

It belongs to the PyrI family. As to quaternary structure, contains catalytic and regulatory chains. Zn(2+) serves as cofactor.

Its function is as follows. Involved in allosteric regulation of aspartate carbamoyltransferase. This Clostridium tetani (strain Massachusetts / E88) protein is Aspartate carbamoyltransferase regulatory chain.